We begin with the raw amino-acid sequence, 378 residues long: Putative F-box only protein 15 (378 aa).

An F-box domain is found at 5–52 (KRVYRSLPFELVEEILKKTPAESLNRFKSTCKQWYGIITSKRFMYNHL).

In Arabidopsis thaliana (Mouse-ear cress), this protein is Putative F-box only protein 15 (FBX15).